Here is a 408-residue protein sequence, read N- to C-terminus: Homogentisate geranylgeranyltransferase (408 aa).

The transit peptide at 1 to 62 (MQAVTAAAAA…TVMHKFSAIS (62 aa)) directs the protein to the chloroplast. A run of 9 helical transmembrane segments spans residues 122-142 (HTIF…MKSI), 156-176 (ALTA…LYDI), 194-214 (SVAT…SIGI), 221-241 (LMCA…EAPF), 248-268 (ALLA…LAFF), 286-306 (LVFA…FKDI), 329-349 (VYQL…LVGA), 352-372 (TNLF…LTLW), and 386-406 (VTSF…LIPF).

It belongs to the UbiA prenyltransferase family. In terms of tissue distribution, expressed in seeds.

Its subcellular location is the plastid. It localises to the chloroplast membrane. It catalyses the reaction homogentisate + (2E,6E,10E)-geranylgeranyl diphosphate + H(+) = 6-geranylgeranyl-2-methylbenzene-1,4-diol + CO2 + diphosphate. It participates in cofactor biosynthesis; tocopherol biosynthesis. In terms of biological role, involved in the synthesis of tocotrienol (vitamin E). Catalyzes the condensation of homogentisate and geranylgeranyl diphosphate to form 2-methyl-6-geranylgeranylbenzoquinol. Possesses low activity with phytyl diphosphate as substrate. In Hordeum vulgare (Barley), this protein is Homogentisate geranylgeranyltransferase.